Consider the following 243-residue polypeptide: tRNA (guanine-N(1)-)-methyltransferase (243 aa).

Residues Gly-112 and 131-136 (LGDYVL) contribute to the S-adenosyl-L-methionine site.

This sequence belongs to the RNA methyltransferase TrmD family. As to quaternary structure, homodimer.

Its subcellular location is the cytoplasm. The catalysed reaction is guanosine(37) in tRNA + S-adenosyl-L-methionine = N(1)-methylguanosine(37) in tRNA + S-adenosyl-L-homocysteine + H(+). In terms of biological role, specifically methylates guanosine-37 in various tRNAs. This Leuconostoc mesenteroides subsp. mesenteroides (strain ATCC 8293 / DSM 20343 / BCRC 11652 / CCM 1803 / JCM 6124 / NCDO 523 / NBRC 100496 / NCIMB 8023 / NCTC 12954 / NRRL B-1118 / 37Y) protein is tRNA (guanine-N(1)-)-methyltransferase.